We begin with the raw amino-acid sequence, 338 residues long: UDP-3-O-acylglucosamine N-acyltransferase (338 aa).

Histidine 251 functions as the Proton acceptor in the catalytic mechanism.

The protein belongs to the transferase hexapeptide repeat family. LpxD subfamily. As to quaternary structure, homotrimer.

It carries out the reaction a UDP-3-O-[(3R)-3-hydroxyacyl]-alpha-D-glucosamine + a (3R)-hydroxyacyl-[ACP] = a UDP-2-N,3-O-bis[(3R)-3-hydroxyacyl]-alpha-D-glucosamine + holo-[ACP] + H(+). The protein operates within bacterial outer membrane biogenesis; LPS lipid A biosynthesis. Functionally, catalyzes the N-acylation of UDP-3-O-acylglucosamine using 3-hydroxyacyl-ACP as the acyl donor. Is involved in the biosynthesis of lipid A, a phosphorylated glycolipid that anchors the lipopolysaccharide to the outer membrane of the cell. The chain is UDP-3-O-acylglucosamine N-acyltransferase from Psychrobacter arcticus (strain DSM 17307 / VKM B-2377 / 273-4).